The primary structure comprises 122 residues: MARIAGVNIPTNKRVIIALTYIHGIGRTTAVKIADKLGIDHARRVQDLTDEEVLRLRETIDEDLMVEGDLRRETAMNIKRLMDLKSYRGLRHRNGLPVRGQRTHTNARTRKGKAKPIAGKKK.

The interval 92 to 122 (HRNGLPVRGQRTHTNARTRKGKAKPIAGKKK) is disordered. Positions 101–122 (QRTHTNARTRKGKAKPIAGKKK) are enriched in basic residues.

This sequence belongs to the universal ribosomal protein uS13 family. Part of the 30S ribosomal subunit. Forms a loose heterodimer with protein S19. Forms two bridges to the 50S subunit in the 70S ribosome.

Functionally, located at the top of the head of the 30S subunit, it contacts several helices of the 16S rRNA. In the 70S ribosome it contacts the 23S rRNA (bridge B1a) and protein L5 of the 50S subunit (bridge B1b), connecting the 2 subunits; these bridges are implicated in subunit movement. Contacts the tRNAs in the A and P-sites. The chain is Small ribosomal subunit protein uS13 from Erythrobacter litoralis (strain HTCC2594).